Reading from the N-terminus, the 97-residue chain is Pyrin domain-containing protein 2 (97 aa).

In terms of domain architecture, Pyrin spans 1–94 (MASSAELDFN…SGRADEHCVM (94 aa)).

In terms of assembly, interacts with PYCARD/ASC (via pyrin domain). Interacts with NLRP2 (via pyrin domain). In terms of tissue distribution, predominantly expressed in peripheral blood. Weakly expressed in testis.

Its subcellular location is the cytoplasm. It localises to the nucleus. Its function is as follows. May play a role in innate immunity by disrupting the interaction between PYCARD and NLRP3, thereby regulating the NLRP3 inflammasome. May also inhibit NF-kappa-B signaling distally by affecting the nuclear accumulation of RELA. In Homo sapiens (Human), this protein is Pyrin domain-containing protein 2.